Reading from the N-terminus, the 93-residue chain is Putative pterin-4-alpha-carbinolamine dehydratase (93 aa).

The protein belongs to the pterin-4-alpha-carbinolamine dehydratase family.

The enzyme catalyses (4aS,6R)-4a-hydroxy-L-erythro-5,6,7,8-tetrahydrobiopterin = (6R)-L-erythro-6,7-dihydrobiopterin + H2O. The protein is Putative pterin-4-alpha-carbinolamine dehydratase of Synechococcus sp. (strain WH7803).